The chain runs to 433 residues: Succinate--CoA ligase [GDP-forming] subunit beta, mitochondrial (433 aa).

A mitochondrion-targeting transit peptide spans 1 to 38; the sequence is IPAAPVAAQARKLLRDLAFRPPLLAARSQVVQLTPRRW. Residues 47 to 275 form the ATP-grasp domain; it reads KKLMSDNGVK…NAEFRQKDIF (229 aa). Residue Gln-58 coordinates GTP. An N6-acetyllysine modification is found at Lys-74. The residue at position 79 (Lys-79) is an N6-succinyllysine. 91-93 provides a ligand contact to GTP; the sequence is GRG. 2 positions are modified to N6-acetyllysine: Lys-133 and Lys-140. Leu-147 contributes to the GTP binding site. Ser-162 bears the Phosphoserine mark. N6-acetyllysine occurs at positions 201 and 228. Mg(2+) contacts are provided by Asn-244 and Asp-258. N6-acetyllysine is present on residues Lys-272 and Lys-292. Asn-309 contacts substrate. N6-succinyllysine is present on Lys-339. Lys-348 bears the N6-acetyllysine mark. 366-368 contacts substrate; that stretch reads GIV. N6-acetyllysine is present on residues Lys-387 and Lys-424.

The protein belongs to the succinate/malate CoA ligase beta subunit family. GTP-specific subunit beta subfamily. In terms of assembly, heterodimer of an alpha and a beta subunit. The beta subunit determines specificity for GTP. It depends on Mg(2+) as a cofactor.

It localises to the mitochondrion. The enzyme catalyses GTP + succinate + CoA = succinyl-CoA + GDP + phosphate. It functions in the pathway carbohydrate metabolism; tricarboxylic acid cycle; succinate from succinyl-CoA (ligase route): step 1/1. Functionally, GTP-specific succinyl-CoA synthetase functions in the citric acid cycle (TCA), coupling the hydrolysis of succinyl-CoA to the synthesis of GTP and thus represents the only step of substrate-level phosphorylation in the TCA. The beta subunit provides nucleotide specificity of the enzyme and binds the substrate succinate, while the binding sites for coenzyme A and phosphate are found in the alpha subunit. This chain is Succinate--CoA ligase [GDP-forming] subunit beta, mitochondrial, found in Sus scrofa (Pig).